We begin with the raw amino-acid sequence, 223 residues long: Uracil-DNA glycosylase (223 aa).

Residue Asp61 is the Proton acceptor of the active site.

This sequence belongs to the uracil-DNA glycosylase (UDG) superfamily. UNG family.

The protein resides in the cytoplasm. The enzyme catalyses Hydrolyzes single-stranded DNA or mismatched double-stranded DNA and polynucleotides, releasing free uracil.. Functionally, excises uracil residues from the DNA which can arise as a result of misincorporation of dUMP residues by DNA polymerase or due to deamination of cytosine. The protein is Uracil-DNA glycosylase of Haemophilus ducreyi (strain 35000HP / ATCC 700724).